A 121-amino-acid polypeptide reads, in one-letter code: Ribosome-binding factor A (121 aa).

Belongs to the RbfA family. Monomer. Binds 30S ribosomal subunits, but not 50S ribosomal subunits or 70S ribosomes.

Its subcellular location is the cytoplasm. Its function is as follows. One of several proteins that assist in the late maturation steps of the functional core of the 30S ribosomal subunit. Associates with free 30S ribosomal subunits (but not with 30S subunits that are part of 70S ribosomes or polysomes). Required for efficient processing of 16S rRNA. May interact with the 5'-terminal helix region of 16S rRNA. In Agathobacter rectalis (strain ATCC 33656 / DSM 3377 / JCM 17463 / KCTC 5835 / VPI 0990) (Eubacterium rectale), this protein is Ribosome-binding factor A.